The following is a 441-amino-acid chain: Glutamate--tRNA ligase 1 (441 aa).

The 'HIGH' region signature appears at Pro9–Asn19. Residues Ala239 to Arg243 carry the 'KMSKS' region motif. Residue Lys242 participates in ATP binding.

It belongs to the class-I aminoacyl-tRNA synthetase family. Glutamate--tRNA ligase type 1 subfamily. As to quaternary structure, monomer.

The protein localises to the cytoplasm. The enzyme catalyses tRNA(Glu) + L-glutamate + ATP = L-glutamyl-tRNA(Glu) + AMP + diphosphate. Functionally, catalyzes the attachment of glutamate to tRNA(Glu) in a two-step reaction: glutamate is first activated by ATP to form Glu-AMP and then transferred to the acceptor end of tRNA(Glu). In Cereibacter sphaeroides (strain ATCC 17025 / ATH 2.4.3) (Rhodobacter sphaeroides), this protein is Glutamate--tRNA ligase 1.